The chain runs to 313 residues: 2,3-dihydroxyphenylpropionate/2,3-dihydroxicinnamic acid 1,2-dioxygenase (313 aa).

The active-site Proton donor is H115. H179 acts as the Proton acceptor in catalysis.

Belongs to the LigB/MhpB extradiol dioxygenase family. As to quaternary structure, homotetramer. The cofactor is Fe(2+).

It carries out the reaction 3-(2,3-dihydroxyphenyl)propanoate + O2 = (2Z,4E)-2-hydroxy-6-oxonona-2,4-dienedioate + H(+). The enzyme catalyses (2E)-3-(2,3-dihydroxyphenyl)prop-2-enoate + O2 = (2Z,4E,7E)-2-hydroxy-6-oxonona-2,4,7-trienedioate + H(+). It participates in aromatic compound metabolism; 3-phenylpropanoate degradation. Functionally, catalyzes the non-heme iron(II)-dependent oxidative cleavage of 2,3-dihydroxyphenylpropionic acid and 2,3-dihydroxicinnamic acid into 2-hydroxy-6-ketononadienedioate and 2-hydroxy-6-ketononatrienedioate, respectively. This chain is 2,3-dihydroxyphenylpropionate/2,3-dihydroxicinnamic acid 1,2-dioxygenase, found in Mycolicibacterium smegmatis (strain ATCC 700084 / mc(2)155) (Mycobacterium smegmatis).